A 214-amino-acid chain; its full sequence is Ribosomal RNA small subunit methyltransferase G (214 aa).

S-adenosyl-L-methionine-binding positions include G81, M86, V132–E133, and R147.

Belongs to the methyltransferase superfamily. RNA methyltransferase RsmG family.

The protein resides in the cytoplasm. It catalyses the reaction guanosine(527) in 16S rRNA + S-adenosyl-L-methionine = N(7)-methylguanosine(527) in 16S rRNA + S-adenosyl-L-homocysteine. Functionally, specifically methylates the N7 position of guanine in position 527 of 16S rRNA. In Pseudomonas aeruginosa (strain LESB58), this protein is Ribosomal RNA small subunit methyltransferase G.